Reading from the N-terminus, the 178-residue chain is ADP-ribosylation factor-like protein 5 (178 aa).

The N-myristoyl glycine moiety is linked to residue Gly2. GTP is bound by residues 24–31 (GLDNAGKT), 67–71 (DIGGQ), and 126–129 (NKQD).

The protein belongs to the small GTPase superfamily. Arf family.

It is found in the golgi apparatus. GTP-binding protein that may be involved in protein trafficking; may modulate vesicle budding and uncoating within the Golgi apparatus. Plays a role in the shedding of pathogen spores from intestinal cells. This Caenorhabditis elegans protein is ADP-ribosylation factor-like protein 5 (arl-5).